We begin with the raw amino-acid sequence, 364 residues long: Long-wave-sensitive opsin 1 (364 aa).

At 1-58 (MTQRWGPQRLAGGQPQAGLEESTQASIFTYTNSNATRDPFEGPNYHIAPRWVYHLTSA) the chain is on the extracellular side. Serine 22 carries an O-linked (GlcNAc) serine glycan. An N-linked (GlcNAc...) asparagine glycan is attached at asparagine 34. Residues 59 to 79 (WMIFVVIASVFTNGLVLVATM) traverse the membrane as a helical segment. Residues 80–90 (RFKKLRHPLNW) lie on the Cytoplasmic side of the membrane. The chain crosses the membrane as a helical span at residues 91-111 (ILVNLAIADLAETIIASTISV). Residues 112 to 126 (VNQIYGYFVLGHPLC) are Extracellular-facing. Cysteine 126 and cysteine 203 form a disulfide bridge. Residues 127 to 147 (VVEGYTVSLCGITGLWSLAII) traverse the membrane as a helical segment. Over 148–168 (SWERWLVVCKPFGNVRFDAKL) the chain is Cytoplasmic. A helical transmembrane segment spans residues 169–189 (AIAGIAFSWIWAAVWTAPPIF). Residues 190 to 219 (GWSRYWPHGLKTSCGPDVFSGSSYPGVQSY) lie on the Extracellular side of the membrane. The chain crosses the membrane as a helical span at residues 220–240 (MIVLMTTCCIIPLSVIILCYL). At 241 to 269 (QVWLAIRAVAKQQKESESTQKAEKEVTRM) the chain is on the cytoplasmic side. A helical transmembrane segment spans residues 270–290 (VVVMVLAYCLCWGPYTFFACF). Over 291 to 301 (AAAHPGYAFHP) the chain is Extracellular. Residues 302–324 (LVAALPAYFAKSATIYNPIIYVF) form a helical membrane-spanning segment. Lysine 312 carries the N6-(retinylidene)lysine modification. Residues 325–364 (MNRQFRNCILQLFGKKVDDSSELSSASRTEASSVSSVSPA) lie on the Cytoplasmic side of the membrane.

It belongs to the G-protein coupled receptor 1 family. Opsin subfamily. Phosphorylated on some or all of the serine and threonine residues present in the C-terminal region. The three color pigments are found in the cone photoreceptor cells.

The protein resides in the membrane. Visual pigments are the light-absorbing molecules that mediate vision. They consist of an apoprotein, opsin, covalently linked to cis-retinal. The protein is Long-wave-sensitive opsin 1 (OPN1LW) of Canis lupus familiaris (Dog).